A 302-amino-acid polypeptide reads, in one-letter code: Sulfate adenylyltransferase subunit 2 (302 aa).

The protein belongs to the PAPS reductase family. CysD subfamily. In terms of assembly, heterodimer composed of CysD, the smaller subunit, and CysN.

The enzyme catalyses sulfate + ATP + H(+) = adenosine 5'-phosphosulfate + diphosphate. Its pathway is sulfur metabolism; hydrogen sulfide biosynthesis; sulfite from sulfate: step 1/3. With CysN forms the ATP sulfurylase (ATPS) that catalyzes the adenylation of sulfate producing adenosine 5'-phosphosulfate (APS) and diphosphate, the first enzymatic step in sulfur assimilation pathway. APS synthesis involves the formation of a high-energy phosphoric-sulfuric acid anhydride bond driven by GTP hydrolysis by CysN coupled to ATP hydrolysis by CysD. The sequence is that of Sulfate adenylyltransferase subunit 2 from Aeromonas hydrophila subsp. hydrophila (strain ATCC 7966 / DSM 30187 / BCRC 13018 / CCUG 14551 / JCM 1027 / KCTC 2358 / NCIMB 9240 / NCTC 8049).